The following is a 693-amino-acid chain: Elongation factor G (693 aa).

One can recognise a tr-type G domain in the interval 8–282 (EHTRNIGIMA…AVIDFMPSPT (275 aa)). GTP is bound by residues 17–24 (AHIDAGKT), 81–85 (DTPGH), and 135–138 (NKMD).

This sequence belongs to the TRAFAC class translation factor GTPase superfamily. Classic translation factor GTPase family. EF-G/EF-2 subfamily.

It localises to the cytoplasm. Catalyzes the GTP-dependent ribosomal translocation step during translation elongation. During this step, the ribosome changes from the pre-translocational (PRE) to the post-translocational (POST) state as the newly formed A-site-bound peptidyl-tRNA and P-site-bound deacylated tRNA move to the P and E sites, respectively. Catalyzes the coordinated movement of the two tRNA molecules, the mRNA and conformational changes in the ribosome. The sequence is that of Elongation factor G from Ruminiclostridium cellulolyticum (strain ATCC 35319 / DSM 5812 / JCM 6584 / H10) (Clostridium cellulolyticum).